Consider the following 244-residue polypeptide: Inactive chemokine-binding protein (244 aa).

A disordered region spans residues 1 to 79 (MHVPASLQQS…STSVEDVDPP (79 aa)). Over residues 37–53 (QDQTPTNDKICQSVTEI) the composition is skewed to polar residues. Acidic residues predominate over residues 54–77 (TESESDPDPEVESEDDSTSVEDVD).

The protein belongs to the orthopoxvirus OPG001 family.

It localises to the host cytoplasm. The protein is truncated in this vaccinal strain and presumably inactive, because the lack of signal peptide prevents the protein of being secreted. In the wild-type viruses inhibits host immune defense by binding to host chemokines. Binds host CC chemokines (beta chemokines) such as RANTES with high affinity, but not CXC or C chemokines (alpha and gamma chemokines). The polypeptide is Inactive chemokine-binding protein (OPG001) (Vaccinia virus (strain Western Reserve) (VACV)).